The following is a 154-amino-acid chain: Transcriptional repressor NrdR (154 aa).

A zinc finger lies at cysteine 3–cysteine 34. The ATP-cone domain maps to valine 46 to aspartate 136.

The protein belongs to the NrdR family. Zn(2+) is required as a cofactor.

Functionally, negatively regulates transcription of bacterial ribonucleotide reductase nrd genes and operons by binding to NrdR-boxes. The sequence is that of Transcriptional repressor NrdR from Mycobacterium leprae (strain Br4923).